Consider the following 133-residue polypeptide: UPF0292 protein TON_0187 (133 aa).

Residues 20–100 form the Toprim domain; it reads EGAIIVEGPR…RVDSETRKEL (81 aa). Mg(2+) is bound by residues Glu-26, Asp-69, and Asp-71.

Belongs to the UPF0292 family. The cofactor is Mg(2+).

The chain is UPF0292 protein TON_0187 from Thermococcus onnurineus (strain NA1).